The primary structure comprises 90 residues: Small ribosomal subunit protein bS18 (90 aa).

The disordered stretch occupies residues methionine 1–lysine 24.

It belongs to the bacterial ribosomal protein bS18 family. As to quaternary structure, part of the 30S ribosomal subunit. Forms a tight heterodimer with protein bS6.

Functionally, binds as a heterodimer with protein bS6 to the central domain of the 16S rRNA, where it helps stabilize the platform of the 30S subunit. This chain is Small ribosomal subunit protein bS18, found in Chlorobium phaeovibrioides (strain DSM 265 / 1930) (Prosthecochloris vibrioformis (strain DSM 265)).